The chain runs to 20 residues: Short cationic peptide-4d (20 aa).

Position 20 is a glutamic acid 1-amide (E20).

In terms of tissue distribution, expressed by the venom gland.

The protein resides in the secreted. This chain is Short cationic peptide-4d, found in Cupiennius salei (American wandering spider).